A 40-amino-acid polypeptide reads, in one-letter code: MKVRNSLRALKKIPGAQIVRRRGRTFVINKKNPRMKARQG.

Belongs to the bacterial ribosomal protein bL36 family.

The polypeptide is Large ribosomal subunit protein bL36B (Arthrobacter sp. (strain FB24)).